A 287-amino-acid chain; its full sequence is Phosphatidylserine decarboxylase proenzyme (287 aa).

Active-site charge relay system; for autoendoproteolytic cleavage activity residues include aspartate 90, histidine 147, and serine 253. Residue serine 253 is the Schiff-base intermediate with substrate; via pyruvic acid; for decarboxylase activity of the active site. The residue at position 253 (serine 253) is a Pyruvic acid (Ser); by autocatalysis.

The protein belongs to the phosphatidylserine decarboxylase family. PSD-B subfamily. Prokaryotic type I sub-subfamily. In terms of assembly, heterodimer of a large membrane-associated beta subunit and a small pyruvoyl-containing alpha subunit. The cofactor is pyruvate. Is synthesized initially as an inactive proenzyme. Formation of the active enzyme involves a self-maturation process in which the active site pyruvoyl group is generated from an internal serine residue via an autocatalytic post-translational modification. Two non-identical subunits are generated from the proenzyme in this reaction, and the pyruvate is formed at the N-terminus of the alpha chain, which is derived from the carboxyl end of the proenzyme. The autoendoproteolytic cleavage occurs by a canonical serine protease mechanism, in which the side chain hydroxyl group of the serine supplies its oxygen atom to form the C-terminus of the beta chain, while the remainder of the serine residue undergoes an oxidative deamination to produce ammonia and the pyruvoyl prosthetic group on the alpha chain. During this reaction, the Ser that is part of the protease active site of the proenzyme becomes the pyruvoyl prosthetic group, which constitutes an essential element of the active site of the mature decarboxylase.

It localises to the cell membrane. It catalyses the reaction a 1,2-diacyl-sn-glycero-3-phospho-L-serine + H(+) = a 1,2-diacyl-sn-glycero-3-phosphoethanolamine + CO2. It functions in the pathway phospholipid metabolism; phosphatidylethanolamine biosynthesis; phosphatidylethanolamine from CDP-diacylglycerol: step 2/2. Catalyzes the formation of phosphatidylethanolamine (PtdEtn) from phosphatidylserine (PtdSer). This is Phosphatidylserine decarboxylase proenzyme from Aliivibrio fischeri (strain MJ11) (Vibrio fischeri).